Reading from the N-terminus, the 837-residue chain is DNA primase (837 aa).

The segment at 782–821 (CLRYNHRGSSKSVRVFLILHLKEETKLIVTFMSQCFANKC) adopts a CHC2-type zinc-finger fold.

The protein belongs to the herpesviridae DNA primase family. In terms of assembly, associates with the helicase and the primase-associated factor to form the helicase-primase factor.

It localises to the host nucleus. Its function is as follows. Essential component of the helicase/primase complex. Unwinds the DNA at the replication forks and generates single-stranded DNA for both leading and lagging strand synthesis. The primase initiates primer synthesis and thereby produces large amount of short RNA primers on the lagging strand that the polymerase elongates using dNTPs. In Connochaetes taurinus (Blue wildebeest), this protein is DNA primase (56).